The following is a 603-amino-acid chain: Vacuolar protein sorting-associated protein 33A (603 aa).

This sequence belongs to the STXBP/unc-18/SEC1 family. As to quaternary structure, probable component of the homotypic fusion and vacuole protein sorting (HOPS) complex consisting of the core class C Vps proteins vps-11, vps-16, vps-18, and which further associates with vps-33.1, vps-39 and vps-41. Interacts with spe-39. As to expression, ubiquitously expressed at high levels in somatic tissues including the pharynx, muscles, hypodermis, neurons, coelomocytes and spermatheca. Expressed in the intestine.

Its subcellular location is the lysosome. It localises to the early endosome. The protein resides in the late endosome. The protein localises to the apical cell membrane. Its function is as follows. Plays a role in vesicle-mediated protein trafficking to lysosomal compartments including the endocytic membrane transport pathways. Believed to act as a component of the putative HOPS endosomal tethering complex which is proposed to be involved in the rab-5-to-rab-7 endosome conversion probably implicating sand-1, and via binding SNAREs and SNARE complexes to mediate tethering and docking events during SNARE-mediated membrane fusion. The HOPS complex is proposed to be recruited to rab-7 on the late endosomal membrane and to regulate late endocytic, phagocytic and autophagic traffic towards lysosomes. Within the HOPS complex, contributes to the normal development of gut granules in embryonic and adult intestinal cells. Required for endosome/lysosome fusion. Required for early embryonic development. This chain is Vacuolar protein sorting-associated protein 33A, found in Caenorhabditis elegans.